We begin with the raw amino-acid sequence, 391 residues long: Casein kinase II subunit alpha 3 (391 aa).

One can recognise a Protein kinase domain in the interval Tyr39 to Phe324. ATP contacts are provided by residues Leu45–Val53 and Lys68. The active-site Proton acceptor is the Asp156.

It belongs to the protein kinase superfamily. Ser/Thr protein kinase family. CK2 subfamily. In terms of assembly, heterotetramer composed of two catalytic subunits (alpha chain and/or alpha' chain) and two regulatory subunits (beta chains). Interacts with PML. As to expression, detected in blood platelets and megakaryocyte cell lines. Poorly expressed in lung. Highly expressed in lung tumor tissues.

It carries out the reaction L-seryl-[protein] + ATP = O-phospho-L-seryl-[protein] + ADP + H(+). It catalyses the reaction L-threonyl-[protein] + ATP = O-phospho-L-threonyl-[protein] + ADP + H(+). In terms of biological role, probable catalytic subunit of a constitutively active serine/threonine-protein kinase complex that phosphorylates a large number of substrates containing acidic residues C-terminal to the phosphorylated serine or threonine. Amplification-dependent oncogene; promotes cell proliferation and tumorigenesis by down-regulating expression of the tumor suppressor protein, PML. May play a role in the pathogenesis of the lung cancer development and progression. The polypeptide is Casein kinase II subunit alpha 3 (CSNK2A3) (Homo sapiens (Human)).